A 304-amino-acid polypeptide reads, in one-letter code: Bifunctional phosphoglucose/phosphomannose isomerase (304 aa).

The 132-residue stretch at phenylalanine 16–alanine 147 folds into the SIS domain. Residues glycine 35, serine 36, serine 74, serine 76, threonine 79, and arginine 122 each coordinate D-fructose 6-phosphate. Residue glutamate 196 is the Proton acceptor of the active site. Residues histidine 212 and lysine 300 each coordinate D-fructose 6-phosphate. Histidine 212 acts as the Proton donor in catalysis. Lysine 300 functions as the Proton acceptor in the catalytic mechanism.

This sequence belongs to the PGI/PMI family. As to quaternary structure, homodimer.

The catalysed reaction is alpha-D-glucose 6-phosphate = beta-D-fructose 6-phosphate. It carries out the reaction D-mannose 6-phosphate = D-fructose 6-phosphate. Its function is as follows. Dual specificity isomerase that catalyzes the isomerization of both glucose-6-phosphate and mannose-6-phosphate to fructose-6-phosphate. The polypeptide is Bifunctional phosphoglucose/phosphomannose isomerase (Thermoplasma volcanium (strain ATCC 51530 / DSM 4299 / JCM 9571 / NBRC 15438 / GSS1)).